We begin with the raw amino-acid sequence, 239 residues long: Peptidyl-tRNA hydrolase (239 aa).

Tyr-14 contributes to the tRNA binding site. The Proton acceptor role is filled by His-19. Phe-64, Asn-66, and Asn-112 together coordinate tRNA. The tract at residues Glu-199–Met-227 is disordered. Residues Gln-203–Arg-213 are compositionally biased toward basic residues.

Belongs to the PTH family. In terms of assembly, monomer.

It is found in the cytoplasm. The catalysed reaction is an N-acyl-L-alpha-aminoacyl-tRNA + H2O = an N-acyl-L-amino acid + a tRNA + H(+). Functionally, hydrolyzes ribosome-free peptidyl-tRNAs (with 1 or more amino acids incorporated), which drop off the ribosome during protein synthesis, or as a result of ribosome stalling. Catalyzes the release of premature peptidyl moieties from peptidyl-tRNA molecules trapped in stalled 50S ribosomal subunits, and thus maintains levels of free tRNAs and 50S ribosomes. This chain is Peptidyl-tRNA hydrolase, found in Chelativorans sp. (strain BNC1).